A 299-amino-acid polypeptide reads, in one-letter code: tRNA dimethylallyltransferase (299 aa).

11-18 is a binding site for ATP; the sequence is GPTAVGKT. 13 to 18 is a binding site for substrate; the sequence is TAVGKT. The interval 36-39 is interaction with substrate tRNA; sequence DSQQ.

It belongs to the IPP transferase family. In terms of assembly, monomer. Mg(2+) serves as cofactor.

It carries out the reaction adenosine(37) in tRNA + dimethylallyl diphosphate = N(6)-dimethylallyladenosine(37) in tRNA + diphosphate. Catalyzes the transfer of a dimethylallyl group onto the adenine at position 37 in tRNAs that read codons beginning with uridine, leading to the formation of N6-(dimethylallyl)adenosine (i(6)A). This is tRNA dimethylallyltransferase from Streptococcus pyogenes serotype M12 (strain MGAS2096).